Here is a 94-residue protein sequence, read N- to C-terminus: Co-chaperonin GroES (94 aa).

It belongs to the GroES chaperonin family. Heptamer of 7 subunits arranged in a ring. Interacts with the chaperonin GroEL.

Its subcellular location is the cytoplasm. In terms of biological role, together with the chaperonin GroEL, plays an essential role in assisting protein folding. The GroEL-GroES system forms a nano-cage that allows encapsulation of the non-native substrate proteins and provides a physical environment optimized to promote and accelerate protein folding. GroES binds to the apical surface of the GroEL ring, thereby capping the opening of the GroEL channel. This Exiguobacterium sibiricum (strain DSM 17290 / CCUG 55495 / CIP 109462 / JCM 13490 / 255-15) protein is Co-chaperonin GroES.